The sequence spans 288 residues: Acetylglutamate kinase (288 aa).

Substrate contacts are provided by residues 73-74 (GG), arginine 95, and asparagine 186.

Belongs to the acetylglutamate kinase family. ArgB subfamily.

The protein localises to the cytoplasm. It catalyses the reaction N-acetyl-L-glutamate + ATP = N-acetyl-L-glutamyl 5-phosphate + ADP. It functions in the pathway amino-acid biosynthesis; L-arginine biosynthesis; N(2)-acetyl-L-ornithine from L-glutamate: step 2/4. Functionally, catalyzes the ATP-dependent phosphorylation of N-acetyl-L-glutamate. The protein is Acetylglutamate kinase of Pelagibacter ubique (strain HTCC1062).